Consider the following 413-residue polypeptide: MGSIINIPGLPDGEFSNYEQVYLKMSRAFSHLQKEHWGIHCVCSVSRDSPNGSTFSETLRQAWMRLVVEYPGLSMVPVGLQKKYPRLDEKVVLLIQHWRVDALGTCMLLDRLFEILGQSTVPSTQPDQVQPNQPTPSFESAAGASKTEDADLQAYARDYIDSFHQRAVNADGLPYRGDATTPPSTTAHWDLDFSVDSTNAIKDACRHHKISVTAAIHTALARTVFSYLTETECQAGYTTVMAVNMRPYLPPPYNSKKHACQTFVASITPTVPYHSGFVESARSLTHEYRSWWSADFMRSLWWIYEYHLAKLSAPRPANAAPMKPPSGVTLSSLGVVDRNLRGGYGPNLRVDKFRFGVSMMTRQTILYAWTFKDRLTLSLNYNDAYYSDLMAREVMSRVASHLEKGLEVELNTV.

Over residues 123–138 (STQPDQVQPNQPTPSF) the composition is skewed to polar residues. Residues 123–145 (STQPDQVQPNQPTPSFESAAGAS) form a disordered region.

It participates in secondary metabolite biosynthesis. In terms of biological role, part of the gene cluster that mediates the biosynthesis of azaterrilone A and other azaphilones, a class of fungal metabolites characterized by a highly oxygenated pyrano-quinone bicyclic core and exhibiting a broad range of bioactivities. The first step of the pathway begins with the non-reducing polyketide synthase tazA that assembles one acetyl-CoA starter unit, five malonyl-CoA units, and catalyzes a series of Claisen condensations, methylation, PT-mediated cyclization, and finally releases the first hexaketide precursor through the R-domain. The tazA product then undergoes reduction on its terminal ketone and the following pyran-ring formation by yet undetermined enzyme(s). Dehydration and enoyl reduction, possibly involving the trans-enoyl reductase tazE leads to the next intermediate. TazD is predicted as an acetyltransferase and might catalyze the acetylation steps leading to the synthesis of azaterrilone A. Azaterrilone A is not the final product of the taz pathway and both the highly reducing polyketide synthase tazB and the dual enzyme tazHJ catalyze late steps of the pathway, leading to the production of the 2 final stereoisomers that contain additional polyketide modification whose structures have still to be determined. The sequence is that of Azaphilone biosynthesis cluster protein M from Aspergillus terreus (strain NIH 2624 / FGSC A1156).